We begin with the raw amino-acid sequence, 1241 residues long: High-affinity potassium transport protein (1241 aa).

Helical transmembrane passes span 49-70 (NFIA…ILLY) and 78-98 (IDAL…TVDV). Asn100 carries an N-linked (GlcNAc...) asparagine glycan. The helical transmembrane segment at 107-127 (IILYIICCISTPIAVHSCLAF) threads the bilayer. Disordered stretches follow at residues 162–241 (TART…SLDD), 253–316 (KYHG…TPED), and 329–570 (EGTA…QLQQ). The span at 164–177 (RTMTKSKTGGTQRV) shows a compositional bias: polar residues. Basic and acidic residues-rich tracts occupy residues 181–191 (GKSDKRDDFQE) and 199–214 (VNRD…HNSR). Residues 215 to 238 (DSNSNANTNSSNNNSINHNGSSGS) are compositionally biased toward low complexity. 7 N-linked (GlcNAc...) asparagine glycosylation sites follow: Asn223, Asn227, Asn233, Asn257, Asn274, Asn353, and Asn364. Composition is skewed to polar residues over residues 268 to 280 (NTAT…QKLK) and 345 to 365 (TDGT…TMNE). Residues 366-375 (SKIRIQDKGA) are compositionally biased toward basic and acidic residues. A compositionally biased stretch (polar residues) spans 380-411 (DQDSVLHSSNSSACTSDEDSLPTNFGGTTPSL). Residues Asn389 and Asn442 are each glycosylated (N-linked (GlcNAc...) asparagine). 2 stretches are compositionally biased toward basic residues: residues 446-455 (PPRKASKSKR) and 482-497 (HLPK…KRRL). The span at 498 to 509 (STGSIDKNSSSD) shows a compositional bias: polar residues. N-linked (GlcNAc...) asparagine glycosylation is found at Asn505 and Asn538. Residues 520–545 (NDDDDGNEGDNMEEYFADNESGDEDD) show a composition bias toward acidic residues. Low complexity predominate over residues 561–570 (KQQQQHQLQQ). N-linked (GlcNAc...) asparagine glycosylation is found at Asn584, Asn660, Asn681, Asn691, and Asn741. Positions 677 to 714 (NSHRNGSEDVSSDSNETTYPLNGNNDHSQNDANGYPTY) are disordered. Polar residues predominate over residues 684–708 (EDVSSDSNETTYPLNGNNDHSQNDA). Helical transmembrane passes span 784–806 (ILVV…WINL), 819–840 (VSPT…GLTL), 844–864 (SMMS…FIII), 868–888 (GFPI…PDLS), and 904–924 (CFTL…LVGL). Asn925 is a glycosylation site (N-linked (GlcNAc...) asparagine). The next 2 membrane-spanning stretches (helical) occupy residues 929–949 (WILF…SKGY) and 977–997 (SIQV…AISI). The segment at 1011-1073 (YGEMGGKPED…ENENPNEEST (63 aa)) is disordered. The span at 1021-1041 (TDTEEDGDCDDEDDDNEEEES) shows a compositional bias: acidic residues. Residues 1050–1062 (GKSKKETKKKKKR) show a composition bias toward basic residues. 2 helical membrane passes run 1084-1104 (QLSF…ICER) and 1117-1137 (VFTI…SLGY). An N-linked (GlcNAc...) asparagine glycan is attached at Asn1141. A disordered region spans residues 1222–1241 (DELKHKRSLSRSSKRSTKTN). Over residues 1226–1241 (HKRSLSRSSKRSTKTN) the composition is skewed to basic residues.

It belongs to the TrkH potassium transport family.

The protein resides in the membrane. Functionally, this protein is required for high-affinity potassium transport. The protein is High-affinity potassium transport protein (TRK1) of Saccharomyces uvarum (Yeast).